The following is a 660-amino-acid chain: DNA mismatch repair protein MutL (660 aa).

Residues 408–436 (DQTSASASVKHASRSQDENQLSEHPNLDF) form a disordered region. The segment covering 425 to 436 (ENQLSEHPNLDF) has biased composition (polar residues).

Belongs to the DNA mismatch repair MutL/HexB family.

Its function is as follows. This protein is involved in the repair of mismatches in DNA. It is required for dam-dependent methyl-directed DNA mismatch repair. May act as a 'molecular matchmaker', a protein that promotes the formation of a stable complex between two or more DNA-binding proteins in an ATP-dependent manner without itself being part of a final effector complex. The chain is DNA mismatch repair protein MutL from Streptococcus uberis (strain ATCC BAA-854 / 0140J).